The primary structure comprises 43 residues: Neurotrophin-3 (43 aa).

It belongs to the NGF-beta family.

The protein localises to the secreted. In terms of biological role, seems to promote the survival of visceral and proprioceptive sensory neurons. This Raja clavata (Thornback ray) protein is Neurotrophin-3 (ntf3).